The chain runs to 1089 residues: MSALPEEVNRTLLQIVQAFASPDNQIRSVAEKALSEEWITENNIEYLLTFLAEQAAFSQDTTVAALSAVLFRKLALKAPPSSKLMIMSKNITHIRKEVLAQIRSSLLKGFLSERADSIRHKLSDAIAECVQDDLPAWPELLQALIESLKSGNPNFRESSFRILTTVPYLITAVDINSILPIFQSGFTDASDNVKIAAVTAFVGYFKQLPKSEWSKLGILLPSLLNSLPRFLDDGKDDALASVFESLIELVELAPKLFKDMFDQIIQFTDMVIKNKDLEPPARTTALELLTVFSENAPQMCKSNQNYGQTLVMVTLIMMTEVSIDDDDAAEWIESDDTDDEEEVTYDHARQALDRVALKLGGEYLAAPLFQYLQQMITSTEWRERFAAMMALSSAAEGCADVLIGEIPKILDMVIPLINDPHPRVQYGCCNVLGQISTDFSPFIQRTAHDRILPALISKLTSECTSRVQTHAAAALVNFSEFASKDILEPYLDSLLTNLLVLLQSNKLYVQEQALTTIAFIAEAAKNKFIKYYDTLMPLLLNVLKVNNKDNSVLKGKCMECATLIGFAVGKEKFHEHSQELISILVALQNSDIDEDDALRSYLEQSWSRICRILGDDFVPLLPIVIPPLLITAKATQDVGLIEEEEAANFQQYPDWDVVQVQGKHIAIHTSVLDDKVSAMELLQSYATLLRGQFAVYVKEVMEEIALPSLDFYLHDGVRAAGATLIPILLSCLLAATGTQNEELVLLWHKASSKLIGGLMSEPMPEITQVYHNSLVNGIKVMGDNCLSEDQLAAFTKGVSANLTDTYERMQDRHGDGDEYNENIDEEEDFTDEDLLDEINKSIAAVLKTTNGHYLKNLENIWPMINTFLLDNEPILVIFALVVIGDLIQYGGEQTASMKNAFIPKVTECLISPDARIRQAASYIIGVCAQYAPSTYADVCIPTLDTLVQIVDFPGSKLEENRSSTENASAAIAKILYAYNSNIPNVDTYTANWFKTLPTITDKEAASFNYQFLSQLIENNSPIVCAQSNISAVVDSVIQALNERSLTEREGQTVISSVKKLLGFLPSSDAMAIFNRYPADIMEKVHKWFA.

Serine 2 carries the post-translational modification N-acetylserine. HEAT repeat units follow at residues 6–39 (EEVN…EEWI), 44–78 (IEYL…ALKA), 96–129 (KEVL…IAEC), 138–165 (PELL…ILTT), 175–207 (INSI…YFKQ), 216–252 (LGIL…LVEL), 260–295 (MFDQ…FSEN), 304–359 (QNYG…ALKL), 361–395 (GEYL…SSAA), 399–439 (ADVL…STDF), 441–481 (PFIQ…FSEF), 484–524 (KDIL…AEAA), 526–568 (NKFI…GFAV), 571–613 (EKFH…CRIL), 615–689 (DDFV…ATLL), 692–735 (QFAV…LLAA), 742–781 (ELVL…IKVM), 788–849 (EDQL…LKTT), 852–890 (HYLK…IQYG), 898–930 (KNAF…CAQY), 938–978 (VCIP…LYAY), 986–1017 (DTYT…QLIE), 1028–1063 (NISA…LLGF), and 1066–1089 (SSDA…KWFA). Threonine 830 carries the post-translational modification Phosphothreonine.

This sequence belongs to the importin beta family. Importin beta-3 subfamily. In terms of assembly, interacts with Ran (GSP1); interacts specifically with the GTP-bound form of Ran (GTP-Ran), protecting it from GTP hydrolysis and nucleotide exchange. Interacts with RPL25; this interaction is dissociated by binding to Ran-GTP. Interacts with YAP1; this interaction is dissociated by binding to Ran-GTP. Interacts with NOP1; via its rg-NLS. Interacts with SOF1; via its cNLS. Interacts with histones H3 and H4; via their NLS. Interacts with ABF1.

The protein localises to the cytoplasm. The protein resides in the nucleus. Functionally, functions in nuclear protein import as nuclear transport receptor. Serves as receptor for classical and arginine/glycine-rich nuclear localization signals (cNLS and rg-NLS) in cargo substrates. Its predominant cargo substrate seems to be ribosomal proteins and ribosome biogenesis trans- and cis-acting factors. Required for nuclear transport of YAP1, NOP1 and SOF1. Mediates the nuclear import of histones H3 and H4. Mediates docking of the importin/substrate complex to the nuclear pore complex (NPC) through binding to repeat-containing nucleoporins. The complex is subsequently translocated through the pore by an energy requiring, Ran-dependent mechanism. At the nucleoplasmic side of the NPC, GTP-Ran binding leads to release of the cargo. The importin is re-exported from the nucleus to the cytoplasm where GTP hydrolysis releases Ran from importin. The directionality of nuclear import is thought to be conferred by an asymmetric distribution of the GTP- and GDP-bound forms of Ran between the cytoplasm and nucleus. Its function is as follows. Plays a role in protein secretion. The polypeptide is Importin subunit beta-3 (Saccharomyces cerevisiae (strain ATCC 204508 / S288c) (Baker's yeast)).